Consider the following 407-residue polypeptide: Phosphopentomutase (407 aa).

Mn(2+)-binding residues include Asp10, Asp307, His312, Asp348, His349, and His360.

This sequence belongs to the phosphopentomutase family. The cofactor is Mn(2+).

It localises to the cytoplasm. It catalyses the reaction 2-deoxy-alpha-D-ribose 1-phosphate = 2-deoxy-D-ribose 5-phosphate. It carries out the reaction alpha-D-ribose 1-phosphate = D-ribose 5-phosphate. It functions in the pathway carbohydrate degradation; 2-deoxy-D-ribose 1-phosphate degradation; D-glyceraldehyde 3-phosphate and acetaldehyde from 2-deoxy-alpha-D-ribose 1-phosphate: step 1/2. Functionally, isomerase that catalyzes the conversion of deoxy-ribose 1-phosphate (dRib-1-P) and ribose 1-phosphate (Rib-1-P) to deoxy-ribose 5-phosphate (dRib-5-P) and ribose 5-phosphate (Rib-5-P), respectively. This is Phosphopentomutase from Methylobacterium nodulans (strain LMG 21967 / CNCM I-2342 / ORS 2060).